The primary structure comprises 443 residues: Tubulin beta chain (443 aa).

8 residues coordinate GTP: Q11, E69, S138, G142, T143, G144, N204, and N226. E69 provides a ligand contact to Mg(2+). The interval 424–443 (QYQDATAEEEGEFEEEEGEN) is disordered. Residues 429-443 (TAEEEGEFEEEEGEN) show a composition bias toward acidic residues.

This sequence belongs to the tubulin family. Dimer of alpha and beta chains. A typical microtubule is a hollow water-filled tube with an outer diameter of 25 nm and an inner diameter of 15 nM. Alpha-beta heterodimers associate head-to-tail to form protofilaments running lengthwise along the microtubule wall with the beta-tubulin subunit facing the microtubule plus end conferring a structural polarity. Microtubules usually have 13 protofilaments but different protofilament numbers can be found in some organisms and specialized cells. The cofactor is Mg(2+). Post-translationally, some glutamate residues at the C-terminus are either polyglutamylated or polyglycylated. These 2 modifications occur exclusively on glutamate residues and result in either polyglutamate or polyglycine chains on the gamma-carboxyl group. Both modifications can coexist on the same protein on adjacent residues, and lowering polyglycylation levels increases polyglutamylation, and reciprocally. The precise function of such modifications is still unclear but they regulate the assembly and dynamics of axonemal microtubules.

It localises to the cytoplasm. The protein resides in the cytoskeleton. In terms of biological role, tubulin is the major constituent of microtubules, a cylinder consisting of laterally associated linear protofilaments composed of alpha- and beta-tubulin heterodimers. Microtubules grow by the addition of GTP-tubulin dimers to the microtubule end, where a stabilizing cap forms. Below the cap, tubulin dimers are in GDP-bound state, owing to GTPase activity of alpha-tubulin. The sequence is that of Tubulin beta chain (BTU1) from Tetrahymena thermophila.